The chain runs to 324 residues: Melanoma-associated antigen B16 (324 aa).

A compositionally biased stretch (basic and acidic residues) spans 1 to 15 (MSQDQESPRCTHDQH). Disordered stretches follow at residues 1-22 (MSQD…FSET) and 39-108 (LSSS…PRNV). Residues 70–81 (SSSIAVTTTSSS) show a composition bias toward low complexity. Residues 82–95 (ESDEASSNQEEEDS) show a composition bias toward acidic residues. The MAGE domain occupies 113 to 312 (LDQKVAFLVN…HSFPSQYAEA (200 aa)).

The polypeptide is Melanoma-associated antigen B16 (MAGEB16) (Homo sapiens (Human)).